The sequence spans 716 residues: Astellifadiene synthase (716 aa).

Residues 1–323 (MEFKYSTLID…SPRYYTDAKF (323 aa)) are terpene cyclase. Asp-92 lines the Mg(2+) pocket. Substrate-binding positions include Asp-92, 179 to 182 (RIYD), Asn-223, 227 to 231 (SWEKE), and 316 to 317 (RY). Residues 92–96 (DDVID) carry the DDXXD 1 motif. An NSE/DTE motif is present at residues 223-231 (NDLVSWEKE). The interval 324-713 (SQRQLDWIKN…FQLKLILQFL (390 aa)) is prenyltransferase. Positions 436, 439, and 468 each coordinate isopentenyl diphosphate. Residues Asp-475 and Asp-479 each contribute to the Mg(2+) site. A DDXXD 2 motif is present at residues 475–479 (DDVED). Arg-484 is a binding site for dimethylallyl diphosphate. Residue Arg-485 coordinates isopentenyl diphosphate. Positions 562, 563, 598, 605, 615, and 625 each coordinate dimethylallyl diphosphate.

The protein in the N-terminal section; belongs to the terpene synthase family. In the C-terminal section; belongs to the FPP/GGPP synthase family. In terms of assembly, hexamer. Mg(2+) is required as a cofactor.

The catalysed reaction is isopentenyl diphosphate + (2E,6E)-farnesyl diphosphate = (2E,6E,10E)-geranylgeranyl diphosphate + diphosphate. The enzyme catalyses isopentenyl diphosphate + (2E,6E,10E)-geranylgeranyl diphosphate = (2E,6E,10E,14E)-geranylfarnesyl diphosphate + diphosphate. It carries out the reaction (2E,6E,10E,14E)-geranylfarnesyl diphosphate = astellifadiene + diphosphate. The protein operates within secondary metabolite biosynthesis; terpenoid biosynthesis. Its function is as follows. Bifunctional terpene synthase that converts dimethylallyl diphosphate (DMAPP) and isopentenyl diphosphate (IPP) into astellifadiene. The C-terminal prenyltransferase (PT) domain of EvAS catalyzes formation of geranylfarnesyl pyrophosphate (GFPP), whereas the N-terminal terpene cyclase (TC) domain catalyzes the cyclization of GFPP to astellifadiene. This Emericella variicolor (Aspergillus stellatus) protein is Astellifadiene synthase.